The sequence spans 311 residues: Tyrosine recombinase XerD (311 aa).

In terms of domain architecture, Core-binding (CB) spans 2–95; the sequence is KTLALQLQGY…AVRGLHRFAA (94 aa). The 189-residue stretch at 116-304 folds into the Tyr recombinase domain; sequence RLPKSLTIDE…TVHALREVWA (189 aa). Active-site residues include arginine 160, lysine 184, histidine 256, arginine 259, and histidine 282. Catalysis depends on tyrosine 291, which acts as the O-(3'-phospho-DNA)-tyrosine intermediate.

The protein belongs to the 'phage' integrase family. XerD subfamily. Forms a cyclic heterotetrameric complex composed of two molecules of XerC and two molecules of XerD.

It is found in the cytoplasm. Site-specific tyrosine recombinase, which acts by catalyzing the cutting and rejoining of the recombining DNA molecules. The XerC-XerD complex is essential to convert dimers of the bacterial chromosome into monomers to permit their segregation at cell division. It also contributes to the segregational stability of plasmids. This Mycobacterium tuberculosis (strain CDC 1551 / Oshkosh) protein is Tyrosine recombinase XerD.